We begin with the raw amino-acid sequence, 191 residues long: Chromobox protein homolog 5 (191 aa).

The tract at residues 1 to 21 (MGKKTKRTADSSSSEDEEEYV) is disordered. Serine 11, serine 12, serine 13, and serine 14 each carry phosphoserine. One can recognise a Chromo 1 domain in the interval 20–78 (YVVEKVLDRRMVKGQVEYLLKWKGFSEEHNTWEPEKNLDCPELISEFMKKYKKMKEGEN). Residue lysine 32 forms a Glycyl lysine isopeptide (Lys-Gly) (interchain with G-Cter in SUMO2) linkage. Lysine 40 carries the N6-acetyllysine modification. A disordered region spans residues 70–117 (YKKMKEGENNKPREKSEGNKRKSSFSNSADDIKSKKKREQSNDIARGF). A compositionally biased stretch (basic and acidic residues) spans 73–89 (MKEGENNKPREKSEGNK). Lysine 91 participates in a covalent cross-link: Glycyl lysine isopeptide (Lys-Gly) (interchain with G-Cter in SUMO2). Phosphoserine occurs at positions 92, 93, 95, and 97. Residues lysine 102, lysine 106, lysine 154, and lysine 184 each participate in a glycyl lysine isopeptide (Lys-Gly) (interchain with G-Cter in SUMO2) cross-link. In terms of domain architecture, Chromo 2; shadow subtype spans 121-179 (LEPEKIIGATDSCGDLMFLMKWKDTDEADLVLAKEANVKCPQIVIAFYEERLTWHAYPE).

As to quaternary structure, homodimer. Interacts with histone H3 methylated at 'Lys-9'. Interacts (via Chromo 2; shadow subtype domain) with the MIS12 complex subunit NSL1; the interaction is direct, involves dimeric CBX5, and occurs during interphase. Interacts with POGZ; POGZ and PXVXL motif-containing proteins such as INCENP and TRIM28 compete for interaction with CBX5. Interacts with LRIF1 (via PxVxL motif). Interacts with INCENP. Interacts with TRIM24. Interacts (via the chromoshadow domain) with ATRX; the interaction is direct. Interacts (via the chromoshadow domain) with CHAF1A; the interaction is direct. Interacts (via the chromoshadow domain) with LBR; the interaction is direct. Interacts (via the chromoshadow domain) with NIPBL; the interaction is direct. Interacts (via the chromoshadow domain) with SP100; the interaction is direct. Interacts (via the chromoshadow domain) with STAM2; the interaction is direct. Interacts (via the chromoshadow domain) with TRIM28; the interaction is direct. Interacts (via the chromoshadow domain) with CBX3; the interaction is direct. Interacts with PRR14 (via N-terminus). Interacts with RRP1B. Interacts with HNRNPU (via C-terminus); this interaction is, at least in part, RNA-dependent. Interacts with ZNF263; recruited to the SIX3 promoter along with other proteins involved in chromatin modification and transcriptional corepression where it contributes to transcriptional repression. Interacts with AURKB during mitosis. Interacts with CHAMP1. Interacts with BAHD1. Interacts with HP1BP3. Interacts with CHD3. Interacts with CHD4. Interacts with SMYD5. Interacts with KMT5B. Interacts with KMT5C. Phosphorylation of HP1 and LBR may be responsible for some of the alterations in chromatin organization and nuclear structure which occur at various times during the cell cycle. Phosphorylated during interphase and possibly hyper-phosphorylated during mitosis. In terms of processing, ubiquitinated.

The protein localises to the nucleus. Its subcellular location is the chromosome. It is found in the centromere. In terms of biological role, component of heterochromatin that recognizes and binds histone H3 tails methylated at 'Lys-9' (H3K9me), leading to epigenetic repression. In contrast, it is excluded from chromatin when 'Tyr-41' of histone H3 is phosphorylated (H3Y41ph). May contribute to the association of heterochromatin with the inner nuclear membrane by interactions with the lamin-B receptor (LBR). Involved in the formation of kinetochore through interaction with the MIS12 complex subunit NSL1. Required for the formation of the inner centromere. Functionally, component of heterochromatin that recognizes and binds histone H3 tails methylated at 'Lys-9' (H3K9me), leading to epigenetic repression. In contrast, it is excluded from chromatin when 'Tyr-41' of histone H3 is phosphorylated (H3Y41ph). Can interact with lamin-B receptor (LBR). This interaction can contribute to the association of the heterochromatin with the inner nuclear membrane. Involved in the formation of functional kinetochore through interaction with MIS12 complex proteins. The sequence is that of Chromobox protein homolog 5 (Cbx5) from Mus musculus (Mouse).